The primary structure comprises 1373 residues: DNA-directed RNA polymerase subunit beta (1373 aa).

It belongs to the RNA polymerase beta chain family. In terms of assembly, the RNAP catalytic core consists of 2 alpha, 1 beta, 1 beta' and 1 omega subunit. When a sigma factor is associated with the core the holoenzyme is formed, which can initiate transcription.

It catalyses the reaction RNA(n) + a ribonucleoside 5'-triphosphate = RNA(n+1) + diphosphate. Functionally, DNA-dependent RNA polymerase catalyzes the transcription of DNA into RNA using the four ribonucleoside triphosphates as substrates. The polypeptide is DNA-directed RNA polymerase subunit beta (Rhodopseudomonas palustris (strain BisB18)).